The following is an 81-amino-acid chain: Adenoregulin-related peptide (81 aa).

The signal sequence occupies residues 1 to 22 (MAFLKKSLLLVLFLGLVSLSIC). Positions 23-43 (EEEKRENEDEEEQEDDEQSEM) are excised as a propeptide. A disordered region spans residues 24–46 (EEKRENEDEEEQEDDEQSEMKRG). A compositionally biased stretch (acidic residues) spans 30-40 (EDEEEQEDDEQ). Isoleucine 78 is subject to Isoleucine amide. The propeptide occupies 79-81 (GEQ).

As to expression, expressed by the skin glands.

The protein resides in the secreted. Functionally, has antibacterial activity against Gram-positive bacterium M.luteus NCT C2665 and against Gram-negative bacterium E.coli K12D31. In Agalychnis callidryas (Red-eyed tree frog), this protein is Adenoregulin-related peptide.